Reading from the N-terminus, the 229-residue chain is Heptahelical transmembrane protein ADIPOR2 (229 aa).

The Cytoplasmic segment spans residues 1-4; that stretch reads MQGA. Residues 5-25 traverse the membrane as a helical segment; that stretch reads ASHDAAAAAAAAAVLGGGHGV. The Extracellular segment spans residues 26 to 30; it reads PRWPR. A helical membrane pass occupies residues 31–51; sequence MVFLVGAMTCLAISATAHLLA. The Cytoplasmic portion of the chain corresponds to 52–66; that stretch reads CHSRRASVVFWQLDY. The helical transmembrane segment at 67 to 87 threads the bilayer; that stretch reads AGISAMIVASFVPPVYYAFLC. Over 88–92 the chain is Extracellular; that stretch reads HRPAR. Residues 93–113 form a helical membrane-spanning segment; it reads VAYLSAISALGALVVGALLSP. The Cytoplasmic segment spans residues 114–124; the sequence is PCSSPRFRRLR. A helical transmembrane segment spans residues 125-145; that stretch reads AALFLAMGLSGVVPALHALWL. The Extracellular portion of the chain corresponds to 146-153; that stretch reads NWGHAACY. The chain crosses the membrane as a helical span at residues 154–174; the sequence is LALSLEVAMGLAYAAGAWFYV. Residues 175–194 are Cytoplasmic-facing; that stretch reads SRVPEKWRPGVFDVVGHSHQ. The chain crosses the membrane as a helical span at residues 195 to 215; that stretch reads IFHVLVLVGAVTHYVAVDVLL. Over 216-229 the chain is Extracellular; the sequence is NWRETVAAACSATS.

The protein belongs to the ADIPOR family.

Its subcellular location is the membrane. Its function is as follows. May play a role in abiotic stress response. The polypeptide is Heptahelical transmembrane protein ADIPOR2 (ADIPOR2) (Oryza sativa subsp. japonica (Rice)).